The sequence spans 65 residues: Large ribosomal subunit protein bL35 (65 aa).

This sequence belongs to the bacterial ribosomal protein bL35 family.

The sequence is that of Large ribosomal subunit protein bL35 from Thermotoga maritima (strain ATCC 43589 / DSM 3109 / JCM 10099 / NBRC 100826 / MSB8).